Reading from the N-terminus, the 503-residue chain is Cytochrome P450 714C1 (503 aa).

The Lumenal portion of the chain corresponds to 1-6 (MEKLLA). Residues 7–27 (LIVVLVILLSLALFYLCNILW) traverse the membrane as a helical; Signal-anchor for type III membrane protein segment. The Cytoplasmic portion of the chain corresponds to 28-503 (LRAVKIRKKL…GLPLMVTKLP (476 aa)). C450 is a binding site for heme.

Belongs to the cytochrome P450 family. Heme is required as a cofactor.

The protein resides in the membrane. Functionally, probably not involved in gibberellin metabolism since over-expression of CYP714C1 in a heterologous system does not induce semi-dwarfism. This is Cytochrome P450 714C1 (CYP714C1) from Oryza sativa subsp. japonica (Rice).